We begin with the raw amino-acid sequence, 684 residues long: Glycine--tRNA ligase beta subunit (684 aa).

The protein belongs to the class-II aminoacyl-tRNA synthetase family. In terms of assembly, tetramer of two alpha and two beta subunits.

The protein localises to the cytoplasm. The enzyme catalyses tRNA(Gly) + glycine + ATP = glycyl-tRNA(Gly) + AMP + diphosphate. This Pseudomonas fluorescens (strain Pf0-1) protein is Glycine--tRNA ligase beta subunit.